Consider the following 131-residue polypeptide: Small ribosomal subunit protein eS8 (131 aa).

Residues Met-1–Gly-42 form a disordered region. The span at Ser-16–Ala-30 shows a compositional bias: basic residues.

The protein belongs to the eukaryotic ribosomal protein eS8 family. Part of the 30S ribosomal subunit.

The polypeptide is Small ribosomal subunit protein eS8 (Pyrobaculum aerophilum (strain ATCC 51768 / DSM 7523 / JCM 9630 / CIP 104966 / NBRC 100827 / IM2)).